The sequence spans 414 residues: Apolipoprotein N-acyltransferase (414 aa).

The next 6 membrane-spanning stretches (helical) occupy residues 19 to 39, 40 to 60, 63 to 83, 91 to 111, 121 to 141, and 153 to 173; these read GIAL…HFGI, TSPL…LKLP, SGFA…ALSF, LIPF…SMAL, LLLW…VPEV, and LSFG…QRWL. A CN hydrolase domain is found at 202-414; sequence IETHIPQEIR…NRSPSGIIAP (213 aa). Residue glutamate 243 is the Proton acceptor of the active site. Lysine 298 is a catalytic residue. Residue cysteine 351 is the Nucleophile of the active site.

It belongs to the CN hydrolase family. Apolipoprotein N-acyltransferase subfamily.

It localises to the cell inner membrane. It catalyses the reaction N-terminal S-1,2-diacyl-sn-glyceryl-L-cysteinyl-[lipoprotein] + a glycerophospholipid = N-acyl-S-1,2-diacyl-sn-glyceryl-L-cysteinyl-[lipoprotein] + a 2-acyl-sn-glycero-3-phospholipid + H(+). The protein operates within protein modification; lipoprotein biosynthesis (N-acyl transfer). Functionally, catalyzes the phospholipid dependent N-acylation of the N-terminal cysteine of apolipoprotein, the last step in lipoprotein maturation. The sequence is that of Apolipoprotein N-acyltransferase from Wolinella succinogenes (strain ATCC 29543 / DSM 1740 / CCUG 13145 / JCM 31913 / LMG 7466 / NCTC 11488 / FDC 602W) (Vibrio succinogenes).